A 281-amino-acid chain; its full sequence is DegV domain-containing protein spr0652 (281 aa).

The DegV domain maps to Trp3 to Ile280. Hexadecanoate-binding residues include Ser63 and Ser91.

Functionally, may bind long-chain fatty acids, such as palmitate, and may play a role in lipid transport or fatty acid metabolism. The protein is DegV domain-containing protein spr0652 of Streptococcus pneumoniae (strain ATCC BAA-255 / R6).